The sequence spans 273 residues: Large ribosomal subunit protein uL2 (273 aa).

Disordered stretches follow at residues 28–53 (KPFAPLVEKNSKSGGRNNNGRITTRH) and 221–273 (RGTA…RRSK). Over residues 39 to 48 (KSGGRNNNGR) the composition is skewed to low complexity.

This sequence belongs to the universal ribosomal protein uL2 family. In terms of assembly, part of the 50S ribosomal subunit. Forms a bridge to the 30S subunit in the 70S ribosome.

In terms of biological role, one of the primary rRNA binding proteins. Required for association of the 30S and 50S subunits to form the 70S ribosome, for tRNA binding and peptide bond formation. It has been suggested to have peptidyltransferase activity; this is somewhat controversial. Makes several contacts with the 16S rRNA in the 70S ribosome. The protein is Large ribosomal subunit protein uL2 of Enterobacter sp. (strain 638).